The sequence spans 427 residues: Glutamyl-tRNA(Gln) amidotransferase subunit D (427 aa).

The region spanning 74-407 (ERVYIIGAGG…EVVRKMFQRN (334 aa)) is the Asparaginase/glutaminase domain. Residues threonine 84, threonine 160, aspartate 161, and lysine 240 contribute to the active site.

Belongs to the asparaginase 1 family. GatD subfamily. Heterodimer of GatD and GatE.

The catalysed reaction is L-glutamyl-tRNA(Gln) + L-glutamine + ATP + H2O = L-glutaminyl-tRNA(Gln) + L-glutamate + ADP + phosphate + H(+). Its function is as follows. Allows the formation of correctly charged Gln-tRNA(Gln) through the transamidation of misacylated Glu-tRNA(Gln) in organisms which lack glutaminyl-tRNA synthetase. The reaction takes place in the presence of glutamine and ATP through an activated gamma-phospho-Glu-tRNA(Gln). The GatDE system is specific for glutamate and does not act on aspartate. This is Glutamyl-tRNA(Gln) amidotransferase subunit D from Aeropyrum pernix (strain ATCC 700893 / DSM 11879 / JCM 9820 / NBRC 100138 / K1).